Here is a 55-residue protein sequence, read N- to C-terminus: Small integral membrane protein 11 (55 aa).

Residues valine 9–glycine 29 traverse the membrane as a helical segment. Positions glutamine 34–alanine 54 form a coiled coil.

Expressed in brain, heart, kidney, thymus, liver, stomach, muscle, lung, testis, ovary, skin and eye.

It is found in the membrane. This chain is Small integral membrane protein 11, found in Mus musculus (Mouse).